The chain runs to 355 residues: MKAEKTSLAVLTAQLTSPDGWQQLLPKGEFRSRDGSPTDVAHWFIDGTIAQNLIHKARQLNQDLLVDYDHETILKAKKGIDAGNVVAAGWFNADEIQWFDDETRQGLYIKPRWTPKAYQQIKDGEFAFLSAVFPYDENGTPLELRMAALTNDPGITGMQRLAVLSATLNPQENVKMPESLRKLLAKLGVEIAEGVELTEEQANTALNALETLQTDKTKADEQVATLSAKNTEVDLSQYVPKATYDAVMSQVAVLSAKTDDVEIDNHISKARNEGRAVEAEVEYLKQFGKQQGVAALSAMLEKRPQIAVLSAQQTQTTKVEKPVEKGTAVLSAADKEAAKLLGISEQDYAKELEAK.

This sequence belongs to the peptidase U35 family.

Its function is as follows. Potential protease involved in virion morphogenesis. This chain is Mu-like prophage FluMu I protein, found in Haemophilus influenzae (strain ATCC 51907 / DSM 11121 / KW20 / Rd).